A 172-amino-acid polypeptide reads, in one-letter code: R-phycocyanin beta chain (172 aa).

(2R,3E)-phycoerythrobilin-binding residues include asparagine 35 and aspartate 39. Residues asparagine 72, cysteine 82, and 84–85 (RD) each bind (2R,3E)-phycocyanobilin. Position 72 is an N4-methylasparagine (asparagine 72). (2R,3E)-phycoerythrobilin is bound by residues 149-151 (PAG) and cysteine 153.

The protein belongs to the phycobiliprotein family. Heterododecamer of 6 alpha and 6 beta chains. The basic functional unit of phycobiliproteins is a ring-shaped hexamer formed from two back-to-back trimers contacting via the alpha chain subunits. The trimers are composed of alpha/beta subunit heterodimers arranged around a three-fold axis of symmetry. The phycoerythrins also contain a gamma subunit which is located in the center of the hexamer. Contains one covalently linked phycocyanobilin chromophore and one covalently linked phycoerythrobilin chromophore.

It localises to the plastid. The protein resides in the chloroplast thylakoid membrane. Light-harvesting photosynthetic tetrapyrrole chromophore-protein from the phycobiliprotein complex (phycobilisome, PBS). Phycocyanin is the major phycobiliprotein in the PBS rod. The chain is R-phycocyanin beta chain (rpcB) from Polysiphonia urceolata (Red alga).